A 101-amino-acid polypeptide reads, in one-letter code: NADH-quinone oxidoreductase subunit K (101 aa).

3 consecutive transmembrane segments (helical) span residues 4–24 (VGHYLAVSAVLFTLGVLGIFI), 29–49 (IIVILMAIELILLAVNINLVA), and 65–85 (FVLTVAAGEAAIGLAILVIYF).

Belongs to the complex I subunit 4L family. As to quaternary structure, NDH-1 is composed of 14 different subunits. Subunits NuoA, H, J, K, L, M, N constitute the membrane sector of the complex.

It is found in the cell inner membrane. It catalyses the reaction a quinone + NADH + 5 H(+)(in) = a quinol + NAD(+) + 4 H(+)(out). NDH-1 shuttles electrons from NADH, via FMN and iron-sulfur (Fe-S) centers, to quinones in the respiratory chain. The immediate electron acceptor for the enzyme in this species is believed to be ubiquinone. Couples the redox reaction to proton translocation (for every two electrons transferred, four hydrogen ions are translocated across the cytoplasmic membrane), and thus conserves the redox energy in a proton gradient. This is NADH-quinone oxidoreductase subunit K from Sphingopyxis alaskensis (strain DSM 13593 / LMG 18877 / RB2256) (Sphingomonas alaskensis).